We begin with the raw amino-acid sequence, 340 residues long: tRNA N6-adenosine threonylcarbamoyltransferase (340 aa).

Fe cation is bound by residues histidine 114 and histidine 118. Residues 140–144 (TISGG), aspartate 173, glycine 186, aspartate 190, and asparagine 281 contribute to the substrate site. Fe cation is bound at residue aspartate 309.

The protein belongs to the KAE1 / TsaD family. It depends on Fe(2+) as a cofactor.

It localises to the cytoplasm. The catalysed reaction is L-threonylcarbamoyladenylate + adenosine(37) in tRNA = N(6)-L-threonylcarbamoyladenosine(37) in tRNA + AMP + H(+). Its function is as follows. Required for the formation of a threonylcarbamoyl group on adenosine at position 37 (t(6)A37) in tRNAs that read codons beginning with adenine. Is involved in the transfer of the threonylcarbamoyl moiety of threonylcarbamoyl-AMP (TC-AMP) to the N6 group of A37, together with TsaE and TsaB. TsaD likely plays a direct catalytic role in this reaction. The sequence is that of tRNA N6-adenosine threonylcarbamoyltransferase from Christiangramia forsetii (strain DSM 17595 / CGMCC 1.15422 / KT0803) (Gramella forsetii).